The following is a 272-amino-acid chain: CD40 ligand (272 aa).

Residues 1–23 (MNEAYSPAAPRPMGSTSPSTMKM) lie on the Cytoplasmic side of the membrane. The chain crosses the membrane as a helical; Signal-anchor for type II membrane protein span at residues 24–44 (FMCFLSVFMVVQTIGTVLFCL). Over 45–272 (YLHMKMDKME…GNTYFGMFKL (228 aa)) the chain is Extracellular. 2 N-linked (GlcNAc...) asparagine glycosylation sites follow: asparagine 124 and asparagine 146. The THD domain maps to 136 to 272 (IATHLAGVKS…GNTYFGMFKL (137 aa)). Cysteine 190 and cysteine 229 are joined by a disulfide. Residue asparagine 251 is glycosylated (N-linked (GlcNAc...) asparagine).

Belongs to the tumor necrosis factor family. Homotrimer. Interacts with CD28. CD40 ligand, soluble form: Exists as either a monomer or a homotrimer. Forms a ternary complex between CD40 and integrins for CD40-CD40LG signaling. The soluble form derives from the membrane form by proteolytic processing.

Its subcellular location is the cell membrane. The protein localises to the cell surface. It localises to the secreted. Cytokine that acts as a ligand to CD40/TNFRSF5. Costimulates T-cell proliferation and cytokine production. Induces the activation of NF-kappa-B. Mediates B-cell proliferation in the absence of co-stimulus as well as IgE production in the presence of IL4. Involved in immunoglobulin class switching. Functionally, acts as a ligand for integrins, specifically ITGA5:ITGB1 and ITGAV:ITGB3; both integrins and the CD40 receptor are required for activation of CD40-CD40LG signaling, which have cell-type dependent effects, such as B-cell activation, NF-kappa-B signaling and anti-apoptotic signaling. The polypeptide is CD40 ligand (CD40LG) (Gallus gallus (Chicken)).